We begin with the raw amino-acid sequence, 328 residues long: Probable cell division protein WhiA (328 aa).

A DNA-binding region (H-T-H motif) is located at residues 273 to 306 (SLEELGALADPPLTKDAVAGRIRRLLAMADKRAS).

The protein belongs to the WhiA family. As to quaternary structure, monomer in solution.

Its function is as follows. Involved in cell division and chromosome segregation. Involved in sporulation. May coordinate the cessation of aerial hyphae growth and subsequent chromosome segregation and/or septation. Required for expression of the ParB partioning protein during sporogenesis. Activates its own transcription and represses WhiB. Binds with low affinity to its own promoter and to the Parp2 sporulation-specific promoter. Also binds directly to the RNA polymerase sigma factor WhiG, leading to inhibition of WhiG-dependent transcription in a dose-dependent manner. This Streptomyces coelicolor (strain ATCC BAA-471 / A3(2) / M145) protein is Probable cell division protein WhiA.